The sequence spans 407 residues: Proteasome-activating nucleotidase (407 aa).

Residues 22–67 adopt a coiled-coil conformation; it reads KEKTQIAELESKVLRLELKNKDISRENVQIKKENEILKRELDKLRI. ATP is bound by residues 192-197 and His-331; that span reads GTGKTL. The docks into pockets in the proteasome alpha-ring to cause gate opening stretch occupies residues 405–407; that stretch reads MYG.

Belongs to the AAA ATPase family. In terms of assembly, homohexamer. The hexameric complex has a two-ring architecture resembling a top hat that caps the 20S proteasome core at one or both ends. Upon ATP-binding, the C-terminus of PAN interacts with the alpha-rings of the proteasome core by binding to the intersubunit pockets.

It is found in the cytoplasm. Its function is as follows. ATPase which is responsible for recognizing, binding, unfolding and translocation of substrate proteins into the archaeal 20S proteasome core particle. Is essential for opening the gate of the 20S proteasome via an interaction with its C-terminus, thereby allowing substrate entry and access to the site of proteolysis. Thus, the C-termini of the proteasomal ATPase function like a 'key in a lock' to induce gate opening and therefore regulate proteolysis. Unfolding activity requires energy from ATP hydrolysis, whereas ATP binding alone promotes ATPase-20S proteasome association which triggers gate opening, and supports translocation of unfolded substrates. In Methanococcus maripaludis (strain C6 / ATCC BAA-1332), this protein is Proteasome-activating nucleotidase.